The primary structure comprises 390 residues: GTPase Obg (390 aa).

Residues 1-159 (MKFVDEAVIR…RHLRLELLLL (159 aa)) form the Obg domain. Residues 22–42 (SFRTEKYVPRGGPDGGDGGDG) form a disordered region. The span at 33–42 (GPDGGDGGDG) shows a compositional bias: gly residues. Positions 160–333 (ADVGMLGLPN…LTYNLMTTIE (174 aa)) constitute an OBG-type G domain. GTP contacts are provided by residues 166–173 (GLPNAGKS), 191–195 (FTTLI), 213–216 (DIPG), 283–286 (NKVD), and 314–316 (SAL). Residues Ser173 and Thr193 each coordinate Mg(2+).

Belongs to the TRAFAC class OBG-HflX-like GTPase superfamily. OBG GTPase family. As to quaternary structure, monomer. Mg(2+) serves as cofactor.

Its subcellular location is the cytoplasm. In terms of biological role, an essential GTPase which binds GTP, GDP and possibly (p)ppGpp with moderate affinity, with high nucleotide exchange rates and a fairly low GTP hydrolysis rate. Plays a role in control of the cell cycle, stress response, ribosome biogenesis and in those bacteria that undergo differentiation, in morphogenesis control. The protein is GTPase Obg of Photobacterium profundum (strain SS9).